The sequence spans 469 residues: Probable periplasmic serine endoprotease DegP-like (469 aa).

The first 25 residues, 1–25 (MNRLLKQVCMVVVSSFMMASMLTHA), serve as a signal peptide directing secretion. Residues H114, D144, and S217 each act as charge relay system in the active site. Substrate-binding positions include 215–217 (GNS) and 272–276 (LGVLI). 2 consecutive PDZ domains span residues 261–352 (LKSD…YRDG) and 358–458 (SVTL…IRQG).

Belongs to the peptidase S1C family.

The protein resides in the periplasm. The enzyme catalyses Acts on substrates that are at least partially unfolded. The cleavage site P1 residue is normally between a pair of hydrophobic residues, such as Val-|-Val.. Functionally, might be efficient in the degradation of transiently denatured and unfolded proteins which accumulate in the periplasm following stress conditions. The sequence is that of Probable periplasmic serine endoprotease DegP-like from Marinomonas sp. (strain MWYL1).